A 105-amino-acid chain; its full sequence is MSWIVLLIAGLLEVVWAIGLKYTHGFTRLTPSIITIAAMIVSIAMLSWAMRTLPVGTAYAVWTGIGAVGAAITGILLLGESASPARLLSLGLIVAGIIGLKLSTH.

Position 1 (M1) is a topological domain, cytoplasmic. The helical transmembrane segment at 2–19 (SWIVLLIAGLLEVVWAIG) threads the bilayer. The Periplasmic segment spans residues 20 to 28 (LKYTHGFTR). A helical membrane pass occupies residues 29-48 (LTPSIITIAAMIVSIAMLSW). The Cytoplasmic segment spans residues 49 to 54 (AMRTLP). Residues 55–77 (VGTAYAVWTGIGAVGAAITGILL) traverse the membrane as a helical segment. The Periplasmic segment spans residues 78 to 86 (LGESASPAR). Residues 87 to 104 (LLSLGLIVAGIIGLKLST) form a helical membrane-spanning segment. Position 105 (H105) is a topological domain, cytoplasmic.

This sequence belongs to the drug/metabolite transporter (DMT) superfamily. Small multidrug resistance (SMR) (TC 2.A.7.1) family. Gdx/SugE subfamily.

The protein localises to the cell inner membrane. Functionally, guanidinium ion exporter. Couples guanidinium export to the proton motive force, exchanging one guanidinium ion for two protons. This Citrobacter freundii protein is Guanidinium exporter.